Reading from the N-terminus, the 196-residue chain is Nucleoid occlusion factor SlmA (196 aa).

Residues 6-66 (RNRREEILQA…GLIEFVEDTL (61 aa)) form the HTH tetR-type domain. Positions 29–48 (TTAKLAANLGVSEAALYRHF) form a DNA-binding region, H-T-H motif. Residues 108 to 135 (DALMGEHDRLRGRMEDLFNRIESSIKQI) adopt a coiled-coil conformation.

The protein belongs to the nucleoid occlusion factor SlmA family. As to quaternary structure, homodimer. Interacts with FtsZ.

The protein resides in the cytoplasm. It localises to the nucleoid. In terms of biological role, required for nucleoid occlusion (NO) phenomenon, which prevents Z-ring formation and cell division over the nucleoid. Acts as a DNA-associated cell division inhibitor that binds simultaneously chromosomal DNA and FtsZ, and disrupts the assembly of FtsZ polymers. SlmA-DNA-binding sequences (SBS) are dispersed on non-Ter regions of the chromosome, preventing FtsZ polymerization at these regions. The chain is Nucleoid occlusion factor SlmA from Idiomarina loihiensis (strain ATCC BAA-735 / DSM 15497 / L2-TR).